A 271-amino-acid polypeptide reads, in one-letter code: 3-methyl-2-oxobutanoate hydroxymethyltransferase (271 aa).

Mg(2+)-binding residues include Asp53 and Asp92. 3-methyl-2-oxobutanoate-binding positions include 53–54, Asp92, and Lys120; that span reads DS. Residue Glu122 participates in Mg(2+) binding. The Proton acceptor role is filled by Glu189.

It belongs to the PanB family. As to quaternary structure, homodecamer; pentamer of dimers. Mg(2+) is required as a cofactor.

The protein localises to the cytoplasm. It catalyses the reaction 3-methyl-2-oxobutanoate + (6R)-5,10-methylene-5,6,7,8-tetrahydrofolate + H2O = 2-dehydropantoate + (6S)-5,6,7,8-tetrahydrofolate. Its pathway is cofactor biosynthesis; (R)-pantothenate biosynthesis; (R)-pantoate from 3-methyl-2-oxobutanoate: step 1/2. In terms of biological role, catalyzes the reversible reaction in which hydroxymethyl group from 5,10-methylenetetrahydrofolate is transferred onto alpha-ketoisovalerate to form ketopantoate. This Burkholderia multivorans (strain ATCC 17616 / 249) protein is 3-methyl-2-oxobutanoate hydroxymethyltransferase.